The primary structure comprises 321 residues: Aldose reductase C (321 aa).

NADP(+) is bound at residue 22–31 (GNQIPSIGLG). The active-site Proton donor is Tyr-62. Residue His-124 participates in substrate binding. 227–281 (SPLGQGKCDFFSNKILKSIAGKYKKSVANVIFKWLNQRGIAAIPKSGNHSRIIEN) is a binding site for NADP(+).

Belongs to the aldo/keto reductase family.

The catalysed reaction is an alditol + NAD(+) = an aldose + NADH + H(+). It carries out the reaction an alditol + NADP(+) = an aldose + NADPH + H(+). Its function is as follows. Catalyzes the NADPH-dependent reduction of a wide variety of carbonyl-containing compounds to their corresponding alcohols with a broad range of catalytic efficiencies. This chain is Aldose reductase C (alrC), found in Dictyostelium discoideum (Social amoeba).